Reading from the N-terminus, the 559-residue chain is ATP synthase subunit beta-3, mitochondrial (559 aa).

Positions Met1–Arg28 are enriched in low complexity. The disordered stretch occupies residues Met1–His39. A mitochondrion-targeting transit peptide spans Met1 to Tyr54. The residue at position 62 (Ser62) is a Phosphoserine. Gly234–Thr241 provides a ligand contact to ATP.

It belongs to the ATPase alpha/beta chains family. As to quaternary structure, F-type ATPases have 2 components, CF(1) - the catalytic core - and CF(0) - the membrane proton channel. CF(1) has five subunits: alpha(3), beta(3), gamma(1), delta(1), epsilon(1). CF(0) has three main subunits: a, b and c.

The protein resides in the mitochondrion. Its subcellular location is the mitochondrion inner membrane. The catalysed reaction is ATP + H2O + 4 H(+)(in) = ADP + phosphate + 5 H(+)(out). Its function is as follows. Mitochondrial membrane ATP synthase (F(1)F(0) ATP synthase or Complex V) produces ATP from ADP in the presence of a proton gradient across the membrane which is generated by electron transport complexes of the respiratory chain. F-type ATPases consist of two structural domains, F(1) - containing the extramembraneous catalytic core, and F(0) - containing the membrane proton channel, linked together by a central stalk and a peripheral stalk. During catalysis, ATP synthesis in the catalytic domain of F(1) is coupled via a rotary mechanism of the central stalk subunits to proton translocation. Subunits alpha and beta form the catalytic core in F(1). Rotation of the central stalk against the surrounding alpha(3)beta(3) subunits leads to hydrolysis of ATP in three separate catalytic sites on the beta subunits. The sequence is that of ATP synthase subunit beta-3, mitochondrial from Arabidopsis thaliana (Mouse-ear cress).